The primary structure comprises 916 residues: Protein translocase subunit SecA (916 aa).

Residues Gln87, 105-109 (GEGKT), and Asp507 contribute to the ATP site. Residues Cys900, Cys902, Cys911, and His912 each contribute to the Zn(2+) site.

The protein belongs to the SecA family. Monomer and homodimer. Part of the essential Sec protein translocation apparatus which comprises SecA, SecYEG and auxiliary proteins SecDF-YajC and YidC. The cofactor is Zn(2+).

The protein localises to the cell inner membrane. The protein resides in the cytoplasm. It catalyses the reaction ATP + H2O + cellular proteinSide 1 = ADP + phosphate + cellular proteinSide 2.. Its function is as follows. Part of the Sec protein translocase complex. Interacts with the SecYEG preprotein conducting channel. Has a central role in coupling the hydrolysis of ATP to the transfer of proteins into and across the cell membrane, serving both as a receptor for the preprotein-SecB complex and as an ATP-driven molecular motor driving the stepwise translocation of polypeptide chains across the membrane. This Neisseria meningitidis serogroup C / serotype 2a (strain ATCC 700532 / DSM 15464 / FAM18) protein is Protein translocase subunit SecA.